Consider the following 351-residue polypeptide: UDP-3-O-acylglucosamine N-acyltransferase 1 (351 aa).

Histidine 237 serves as the catalytic Proton acceptor.

It belongs to the transferase hexapeptide repeat family. LpxD subfamily. In terms of assembly, homotrimer.

The enzyme catalyses a UDP-3-O-[(3R)-3-hydroxyacyl]-alpha-D-glucosamine + a (3R)-hydroxyacyl-[ACP] = a UDP-2-N,3-O-bis[(3R)-3-hydroxyacyl]-alpha-D-glucosamine + holo-[ACP] + H(+). It participates in bacterial outer membrane biogenesis; LPS lipid A biosynthesis. Catalyzes the N-acylation of UDP-3-O-acylglucosamine using 3-hydroxyacyl-ACP as the acyl donor. Is involved in the biosynthesis of lipid A, a phosphorylated glycolipid that anchors the lipopolysaccharide to the outer membrane of the cell. This chain is UDP-3-O-acylglucosamine N-acyltransferase 1, found in Legionella pneumophila (strain Paris).